A 103-amino-acid polypeptide reads, in one-letter code: Small ribosomal subunit protein uS14c (103 aa).

The disordered stretch occupies residues Lys34–Asn56.

It belongs to the universal ribosomal protein uS14 family. Part of the 30S ribosomal subunit.

Its subcellular location is the plastid. The protein localises to the chloroplast. In terms of biological role, binds 16S rRNA, required for the assembly of 30S particles. The sequence is that of Small ribosomal subunit protein uS14c from Brachypodium distachyon (Purple false brome).